The following is a 381-amino-acid chain: Odorant receptor 46a, isoform A (381 aa).

Topologically, residues 1 to 37 are cytoplasmic; that stretch reads MSKGVEIFYKGQKAFLNILSLWPQIERRWRIIHQVNY. The chain crosses the membrane as a helical span at residues 38–58; the sequence is VHVIVFWVLLFDLLLVLHVMA. Asparagine 59 carries N-linked (GlcNAc...) asparagine glycosylation. Over 59-65 the chain is Extracellular; it reads NLSYMSE. Residues 66-86 form a helical membrane-spanning segment; that stretch reads VVKAIFILATSAGHTTKLLSI. Residues 87 to 127 lie on the Cytoplasmic side of the membrane; sequence KANNVQMEELFRRLDNEEFRPRGANEELIFAAACERSRKLR. A helical transmembrane segment spans residues 128–148; sequence DFYGALSFAALSMILIPQFAL. Residues 149 to 170 are Extracellular-facing; sequence DWSHLPLKTYNPLGENTGSPAY. The chain crosses the membrane as a helical span at residues 171-191; it reads WLLYCYQCLALSVSCITNIGF. The Cytoplasmic portion of the chain corresponds to 192–255; sequence DSLCSSLFIF…KTVERLLCKP (64 aa). The helical transmembrane segment at 256–276 threads the bilayer; that stretch reads ISVQIFCSVLVLTANFYAIAV. Residues 277 to 287 lie on the Extracellular side of the membrane; sequence LSDERLELFKY. Residues 288–308 form a helical membrane-spanning segment; it reads VTYQACMLIQIFILCYYAGEV. Residues 309–355 lie on the Cytoplasmic side of the membrane; it reads TQRSLDLPHELYKTSWVDWDYRSRRIALLFMQRLHSTLRIRTLNPSL. A helical transmembrane segment spans residues 356-376; sequence GFDLMLFSSIVNCSYSYFALL. Topologically, residues 377–381 are extracellular; the sequence is KRVNS.

It belongs to the insect chemoreceptor superfamily. Heteromeric odorant receptor channel (TC 1.A.69) family. Or2a subfamily. Interacts with Orco. Complexes exist early in the endomembrane system in olfactory sensory neurons (OSNs), coupling these complexes to the conserved ciliary trafficking pathway. Isoform A is expressed in a subset of 17 olfactory receptor neurons in the maxillary palp.

Its subcellular location is the cell membrane. Odorant receptor which mediates acceptance or avoidance behavior, depending on its substrates. The odorant receptor repertoire encodes a large collection of odor stimuli that vary widely in identity, intensity, and duration. May form a complex with Orco to form odorant-sensing units, providing sensitive and prolonged odorant signaling and calcium permeability. The chain is Odorant receptor 46a, isoform A (Or46a) from Drosophila melanogaster (Fruit fly).